Reading from the N-terminus, the 416-residue chain is Glutamyl-tRNA reductase (416 aa).

Substrate is bound by residues 49-52 (TCNR), S105, 110-112 (EPQ), and Q116. C50 functions as the Nucleophile in the catalytic mechanism. Residue 185–190 (GAGETI) participates in NADP(+) binding.

It belongs to the glutamyl-tRNA reductase family. Homodimer.

The catalysed reaction is (S)-4-amino-5-oxopentanoate + tRNA(Glu) + NADP(+) = L-glutamyl-tRNA(Glu) + NADPH + H(+). It functions in the pathway porphyrin-containing compound metabolism; protoporphyrin-IX biosynthesis; 5-aminolevulinate from L-glutamyl-tRNA(Glu): step 1/2. In terms of biological role, catalyzes the NADPH-dependent reduction of glutamyl-tRNA(Glu) to glutamate 1-semialdehyde (GSA). This Shewanella baltica (strain OS185) protein is Glutamyl-tRNA reductase.